Reading from the N-terminus, the 659-residue chain is Chaperone protein DnaK (659 aa).

Phosphothreonine; by autocatalysis is present on threonine 201. The span at arginine 571 to arginine 592 shows a compositional bias: basic and acidic residues. The tract at residues arginine 571–aspartate 659 is disordered. Over residues alanine 600–glutamine 613 the composition is skewed to low complexity.

This sequence belongs to the heat shock protein 70 family.

Acts as a chaperone. This chain is Chaperone protein DnaK, found in Chlamydia abortus (strain DSM 27085 / S26/3) (Chlamydophila abortus).